The chain runs to 611 residues: tRNA uridine 5-carboxymethylaminomethyl modification enzyme MnmG (611 aa).

12–17 is an FAD binding site; that stretch reads GGGHSG. 271–285 is an NAD(+) binding site; sequence GPRYCPSIEEKVYRF.

It belongs to the MnmG family. In terms of assembly, homodimer. Heterotetramer of two MnmE and two MnmG subunits. FAD is required as a cofactor.

Its subcellular location is the cytoplasm. In terms of biological role, NAD-binding protein involved in the addition of a carboxymethylaminomethyl (cmnm) group at the wobble position (U34) of certain tRNAs, forming tRNA-cmnm(5)s(2)U34. This Karelsulcia muelleri (strain GWSS) (Sulcia muelleri) protein is tRNA uridine 5-carboxymethylaminomethyl modification enzyme MnmG.